A 122-amino-acid polypeptide reads, in one-letter code: Large ribosomal subunit protein bL17 (122 aa).

This sequence belongs to the bacterial ribosomal protein bL17 family. In terms of assembly, part of the 50S ribosomal subunit. Contacts protein L32.

This Neisseria meningitidis serogroup B (strain ATCC BAA-335 / MC58) protein is Large ribosomal subunit protein bL17.